A 76-amino-acid polypeptide reads, in one-letter code: Putative Fe(2+) transport protein A (76 aa).

It belongs to the FeoA family.

Might be involved in Fe(2+) ion uptake. The chain is Putative Fe(2+) transport protein A from Helicobacter pylori (strain ATCC 700392 / 26695) (Campylobacter pylori).